The sequence spans 513 residues: MGCSVLLLTITVSTLGGLVFGYELGIISGALPQLQTHFSLGCVQQEAVVSALLIGSLFASIIGGWLIDRHGRRTSILLSNLLILAGSVILTTGTSFFALVIGRAVIGFAMTVSSMSCCIFVSEMVTPERRGLMVTLYEVGITVGILIAYAVNYIFNNVPLTGWRYMFGFAIIPSLIQLASIVLLPKQAEVFVIHDDDSRQADRLTEETETSNQHQQSEKYGVSDLFKSKDNMRRRTVIGVGLVLSQQFTGQPNVLFYASTILFSVGFQSNASAILASVGFGIVKVIATLLAMLCSDRAGRRSLLIGGCSMLAVGLILTGFLCRQSVIDTTKRCTSVGPHSNLTLSAEHDEGVGFSSQTLDVHEHLRSFSQSEDIYKWIIFTCLMAVVSAFSVSFGPMTWVVLSEIFPKDIRGRAFSFINCFNVGANLIVSFSFLSIIDVIGLSGVFLMYGVVGIAGVVFIYLVLPETKGKSLQDIDRELSQTRMIHRQELCSIFQRRRFSPGYQRVQLTSTAT.

At 1–6 (MGCSVL) the chain is on the cytoplasmic side. Residues 7–27 (LLTITVSTLGGLVFGYELGII) form a helical membrane-spanning segment. The Extracellular segment spans residues 28–46 (SGALPQLQTHFSLGCVQQE). The helical transmembrane segment at 47 to 67 (AVVSALLIGSLFASIIGGWLI) threads the bilayer. Residues 68–80 (DRHGRRTSILLSN) lie on the Cytoplasmic side of the membrane. A helical membrane pass occupies residues 81–101 (LLILAGSVILTTGTSFFALVI). At 102–104 (GRA) the chain is on the extracellular side. A helical membrane pass occupies residues 105–125 (VIGFAMTVSSMSCCIFVSEMV). Over 126-130 (TPERR) the chain is Cytoplasmic. Residues 131–151 (GLMVTLYEVGITVGILIAYAV) traverse the membrane as a helical segment. Topologically, residues 152 to 164 (NYIFNNVPLTGWR) are extracellular. Residues 165–185 (YMFGFAIIPSLIQLASIVLLP) form a helical membrane-spanning segment. At 186–236 (KQAEVFVIHDDDSRQADRLTEETETSNQHQQSEKYGVSDLFKSKDNMRRRT) the chain is on the cytoplasmic side. The chain crosses the membrane as a helical span at residues 237 to 257 (VIGVGLVLSQQFTGQPNVLFY). Residue 246 to 247 (QQ) coordinates D-glucose. The Extracellular portion of the chain corresponds to 258–272 (ASTILFSVGFQSNAS). Residue Asn-270 is glycosylated (N-linked (GlcNAc...) asparagine). Residues 273-293 (AILASVGFGIVKVIATLLAML) traverse the membrane as a helical segment. Residues 294-301 (CSDRAGRR) are Cytoplasmic-facing. Residues 302–322 (SLLIGGCSMLAVGLILTGFLC) traverse the membrane as a helical segment. Topologically, residues 323–376 (RQSVIDTTKRCTSVGPHSNLTLSAEHDEGVGFSSQTLDVHEHLRSFSQSEDIYK) are extracellular. A glycan (N-linked (GlcNAc...) asparagine) is linked at Asn-341. Residues 377-397 (WIIFTCLMAVVSAFSVSFGPM) form a helical membrane-spanning segment. At 398 to 422 (TWVVLSEIFPKDIRGRAFSFINCFN) the chain is on the cytoplasmic side. D-glucose is bound at residue Trp-399. 2 helical membrane passes run 423–443 (VGAN…IGLS) and 444–464 (GVFL…YLVL). Residues 465-513 (PETKGKSLQDIDRELSQTRMIHRQELCSIFQRRRFSPGYQRVQLTSTAT) are Cytoplasmic-facing.

Belongs to the major facilitator superfamily. Sugar transporter (TC 2.A.1.1) family. Glucose transporter subfamily.

The protein resides in the endomembrane system. The protein localises to the cytoplasm. Its subcellular location is the perinuclear region. The enzyme catalyses D-glucose(out) = D-glucose(in). Functionally, facilitative glucose transporter required for the development of the cardiovascular system. The protein is Solute carrier family 2, facilitated glucose transporter member 10 of Danio rerio (Zebrafish).